Here is a 105-residue protein sequence, read N- to C-terminus: Nucleoid-associated protein MW0434 (105 aa).

Positions 1 to 33 (MRGGGNMQQMMKQMQKMQKKMAQEQEKLKEERI) are disordered. Low complexity predominate over residues 7-16 (MQQMMKQMQK). Basic and acidic residues predominate over residues 21-33 (MAQEQEKLKEERI).

It belongs to the YbaB/EbfC family. Homodimer.

Its subcellular location is the cytoplasm. It localises to the nucleoid. Functionally, binds to DNA and alters its conformation. May be involved in regulation of gene expression, nucleoid organization and DNA protection. In Staphylococcus aureus (strain MW2), this protein is Nucleoid-associated protein MW0434.